We begin with the raw amino-acid sequence, 643 residues long: Ecto-NOX disulfide-thiol exchanger 1 (643 aa).

An RRM domain is found at 142-221 (KTVFVGGLPE…GRLHVDFAQA (80 aa)). 2 coiled-coil regions span residues 307 to 342 (VQSA…LTGI) and 425 to 521 (QAYA…QLKG).

It belongs to the ENOX family. Cu cation is required as a cofactor.

Its subcellular location is the cell membrane. It is found in the secreted. The protein localises to the extracellular space. Not inhibited by the antitumor sulfonylurea LY181984, the vabilloid capsaicin, and retinoids. Functionally, probably acts as a terminal oxidase of plasma electron transport from cytosolic NAD(P)H via hydroquinones to acceptors at the cell surface. Hydroquinone oxidase activity alternates with a protein disulfide-thiol interchange/oxidoreductase activity which may control physical membrane displacements associated with vesicle budding or cell enlargement. The activities oscillate with a period length of 24 minutes and play a role in control of the ultradian cellular biological clock. The protein is Ecto-NOX disulfide-thiol exchanger 1 (Enox1) of Mus musculus (Mouse).